The sequence spans 153 residues: Antibacterial peptide PMAP-23 (153 aa).

An N-terminal signal peptide occupies residues 1–29 (METQRASLCLGRWSLWLLLLGLVVPSASA). Q30 carries the pyrrolidone carboxylic acid modification. Positions 30 to 130 (QALSYREAVL…DITCNQLQSV (101 aa)) are excised as a propeptide. The segment at 61 to 80 (DQPPKADEDPGTPKPVSFTV) is disordered. Intrachain disulfides connect C85–C96 and C107–C124.

It belongs to the cathelicidin family.

It is found in the secreted. Exerts antimicrobial activity against both Gram-positive and negative bacteria at concentrations of 2-16 micro molar. Its activity appears to be mediated by its ability to damage bacterial membranes. The protein is Antibacterial peptide PMAP-23 (PMAP23) of Sus scrofa (Pig).